The sequence spans 341 residues: KH domain-containing RNA-binding protein qki.S (341 aa).

Positions 88 to 154 constitute a KH domain; the sequence is YVPVKEYPDF…WEHLNEDLHV (67 aa). The Nuclear localization signal motif lies at 324–330; the sequence is RVHPYQR.

It belongs to the quaking family. Homodimer; does not require RNA to homodimerize.

Its subcellular location is the nucleus. It is found in the cytoplasm. Its function is as follows. RNA reader protein, which recognizes and binds specific RNAs, thereby regulating RNA metabolic processes, such as pre-mRNA splicing, circular RNA (circRNA) formation, mRNA export, mRNA stability and/or translation. Involved in various cellular processes, such as mRNA storage into stress granules, apoptosis, interferon response, glial cell fate and development. Binds to the 5'-NACUAAY-N(1,20)-UAAY-3' RNA core sequence. Acts as a mRNA modification reader that specifically recognizes and binds mRNA transcripts modified by internal N(7)-methylguanine (m7G). Promotes the formation of circular RNAs (circRNAs): acts by binding to sites flanking circRNA-forming exons. CircRNAs are produced by back-splicing circularization of pre-mRNAs. Required to protect and promote stability of mRNAs which promotes oligodendrocyte differentiation. Acts as an important regulator of muscle development. Essential for notochord development. The protein is KH domain-containing RNA-binding protein qki.S of Xenopus laevis (African clawed frog).